The primary structure comprises 131 residues: Leptin receptor gene-related protein (131 aa).

The next 4 helical transmembrane spans lie at Leu-7–Leu-27, Val-32–Ala-52, Leu-69–Ala-89, and Gly-100–Phe-120.

It belongs to the OB-RGRP/VPS55 family. As to quaternary structure, interacts with LEPR. Interacts with RAB13.

It is found in the golgi apparatus membrane. It localises to the endosome membrane. Its function is as follows. Negatively regulates leptin receptor (LEPR) cell surface expression, and thus decreases response to leptin/LEP. Negatively regulates growth hormone (GH) receptor cell surface expression in liver. May play a role in liver resistance to GH during periods of reduced nutrient availability. In Sus scrofa (Pig), this protein is Leptin receptor gene-related protein (LEPROT).